A 555-amino-acid polypeptide reads, in one-letter code: Formate--tetrahydrofolate ligase (555 aa).

65–72 (TPAGEGKS) lines the ATP pocket.

It belongs to the formate--tetrahydrofolate ligase family.

It carries out the reaction (6S)-5,6,7,8-tetrahydrofolate + formate + ATP = (6R)-10-formyltetrahydrofolate + ADP + phosphate. It functions in the pathway one-carbon metabolism; tetrahydrofolate interconversion. The sequence is that of Formate--tetrahydrofolate ligase from Staphylococcus carnosus (strain TM300).